Consider the following 664-residue polypeptide: Armadillo repeat protein involved in nucleocytoplasmic transport Syo2 (664 aa).

The ARM repeat unit spans residues G77–K119.

This sequence belongs to the nuclear import and ribosome assembly adapter family. In terms of assembly, forms a heterotrimeric complex with rpl5 and rpl11a or rpl11b; interaction of this complex with kap104 allows the nuclear import of the heterotrimer. Component of a hexameric 5S RNP precursor complex; this complex acts as a precursor for ribosome assembly.

The protein resides in the cytoplasm. The protein localises to the nucleus. In terms of biological role, nuclear import adapter that specifically recruits the two functionally and topologically linked ribosomal proteins rpl5 and rpl11 (encoded by rpl11a and rpl11b). Guarantees that this cargo pair remains bound together from the time of synthesis in the cytoplasm until delivery to the nascent 5S rRNA in the nucleus. This chain is Armadillo repeat protein involved in nucleocytoplasmic transport Syo2, found in Schizosaccharomyces pombe (strain 972 / ATCC 24843) (Fission yeast).